The chain runs to 146 residues: Envelope protein OPG155 (146 aa).

Residues Met1–Ile21 form a helical; Signal-anchor for type II membrane protein membrane-spanning segment. Residues Gln22–Leu146 are Virion surface-facing.

The protein belongs to the orthopoxvirus OPG155 protein family. In terms of assembly, part of a stable entry-fusion complex (EFC) which is at least composed of proteins OPG143, OPG147, OPG155, OPG086, OPG094, OPG107, OPG104, and OPG099. Formation of the viral membrane is necessary for the assembly of the complex. Interacts directly with protein OPG107. In terms of processing, contains two intramolecular disulfide bonds. They are created by the viral disulfide bond formation pathway, a poxvirus-specific pathway that operates on the cytoplasmic side of the MV membranes.

It localises to the virion membrane. Envelope protein required for virus entry into host cell and for cell-cell fusion (syncytium formation). This Monkeypox virus (strain Zaire-96-I-16) (MPX) protein is Envelope protein OPG155 (OPG155).